A 630-amino-acid chain; its full sequence is Molybdenum cofactor biosynthesis protein 1 (630 aa).

The region spanning 61-298 (RFNRHHTYLR…SKTYHVPGFK (238 aa)) is the Radical SAM core domain. R70 provides a ligand contact to GTP. [4Fe-4S] cluster-binding residues include C77 and C81. Position 83 (Y83) interacts with S-adenosyl-L-methionine. C84 is a [4Fe-4S] cluster binding site. GTP is bound at residue R120. G124 contributes to the S-adenosyl-L-methionine binding site. T151 contributes to the GTP binding site. S-adenosyl-L-methionine is bound at residue S175. Residue K212 coordinates GTP. M246 lines the S-adenosyl-L-methionine pocket. 2 residues coordinate [4Fe-4S] cluster: C312 and C315. 317–319 (RLR) contacts GTP. Residue C329 participates in [4Fe-4S] cluster binding. Residues 402–629 (KEVKNYLLKL…GGKSSSPQIT (228 aa)) are molybdenum cofactor biosynthesis protein C. D599 serves as the catalytic For molybdenum cofactor biosynthesis protein C activity.

This sequence in the C-terminal section; belongs to the MoaC family. In the N-terminal section; belongs to the radical SAM superfamily. MoaA family. In terms of assembly, isoform mocs1a and isoform mocs1b probably form a heterooligomer. [4Fe-4S] cluster serves as cofactor.

It carries out the reaction GTP + AH2 + S-adenosyl-L-methionine = (8S)-3',8-cyclo-7,8-dihydroguanosine 5'-triphosphate + 5'-deoxyadenosine + L-methionine + A + H(+). It catalyses the reaction (8S)-3',8-cyclo-7,8-dihydroguanosine 5'-triphosphate = cyclic pyranopterin phosphate + diphosphate. The protein operates within cofactor biosynthesis; molybdopterin biosynthesis. Isoform mocs1a and isoform mocs1b probably form a complex that catalyzes the conversion of 5'-GTP to cyclic pyranopterin monophosphate (cPMP). mocs1a catalyzes the cyclization of GTP to (8S)-3',8-cyclo-7,8-dihydroguanosine 5'-triphosphate and mocs1b catalyzes the subsequent conversion of (8S)-3',8-cyclo-7,8-dihydroguanosine 5'-triphosphate to cPMP. The sequence is that of Molybdenum cofactor biosynthesis protein 1 (mocs1) from Dictyostelium discoideum (Social amoeba).